The primary structure comprises 746 residues: NAD(P)H-quinone oxidoreductase subunit 5, chloroplastic (746 aa).

A run of 16 helical transmembrane segments spans residues 9-29 (WIIPFIPLPVPILLGVGLLLF), 40-60 (WTFLSIFLLSIVMIFSLYLSI), 89-109 (IDPLTSIMSILITTVGILVLI), 125-145 (FAYMGFFNTSMLGLVTSSNLI), 147-167 (VYFFWELVGMCSYLLIGFWFT), 185-205 (GDFGLLLGILGLYWITGSFEF), 221-241 (VNLLFLTLCAFLLFVGPIAKS), 258-278 (TPISALIHAATMVAAGIFLVA), 280-300 (LLPLFIVIPSIMYIISLIGII), 327-347 (LGYMMLALGMGSYRSALFHLI), 354-374 (ALLFLGSGSIIHSMEAIVGYS), 396-416 (TAFLVGTLSLCGIPPLACFWS), 425-445 (LLFSPIFAIIACSTAGLTAFY), 547-567 (ILFPMLVLLLFTLFIGAIGIP), 608-628 (FSVSIAVFGIFIAYCLYKPFY), and 723-743 (YLFLYLSYVLIFLMILFFFYF).

This sequence belongs to the complex I subunit 5 family. In terms of assembly, NDH is composed of at least 16 different subunits, 5 of which are encoded in the nucleus.

It localises to the plastid. It is found in the chloroplast thylakoid membrane. It carries out the reaction a plastoquinone + NADH + (n+1) H(+)(in) = a plastoquinol + NAD(+) + n H(+)(out). The enzyme catalyses a plastoquinone + NADPH + (n+1) H(+)(in) = a plastoquinol + NADP(+) + n H(+)(out). Functionally, NDH shuttles electrons from NAD(P)H:plastoquinone, via FMN and iron-sulfur (Fe-S) centers, to quinones in the photosynthetic chain and possibly in a chloroplast respiratory chain. The immediate electron acceptor for the enzyme in this species is believed to be plastoquinone. Couples the redox reaction to proton translocation, and thus conserves the redox energy in a proton gradient. This chain is NAD(P)H-quinone oxidoreductase subunit 5, chloroplastic (ndhF), found in Crucihimalaya wallichii (Rock-cress).